Consider the following 233-residue polypeptide: Phosphoribosylformylglycinamidine synthase subunit PurQ (233 aa).

The 225-residue stretch at 9–233 folds into the Glutamine amidotransferase type-1 domain; it reads RIGIVTFPGS…LSGFLSAFSS (225 aa). Residue Cys-92 is the Nucleophile of the active site. Catalysis depends on residues His-201 and Glu-203.

In terms of assembly, part of the FGAM synthase complex composed of 1 PurL, 1 PurQ and 2 PurS subunits.

The protein resides in the cytoplasm. The catalysed reaction is N(2)-formyl-N(1)-(5-phospho-beta-D-ribosyl)glycinamide + L-glutamine + ATP + H2O = 2-formamido-N(1)-(5-O-phospho-beta-D-ribosyl)acetamidine + L-glutamate + ADP + phosphate + H(+). It carries out the reaction L-glutamine + H2O = L-glutamate + NH4(+). It functions in the pathway purine metabolism; IMP biosynthesis via de novo pathway; 5-amino-1-(5-phospho-D-ribosyl)imidazole from N(2)-formyl-N(1)-(5-phospho-D-ribosyl)glycinamide: step 1/2. Its function is as follows. Part of the phosphoribosylformylglycinamidine synthase complex involved in the purines biosynthetic pathway. Catalyzes the ATP-dependent conversion of formylglycinamide ribonucleotide (FGAR) and glutamine to yield formylglycinamidine ribonucleotide (FGAM) and glutamate. The FGAM synthase complex is composed of three subunits. PurQ produces an ammonia molecule by converting glutamine to glutamate. PurL transfers the ammonia molecule to FGAR to form FGAM in an ATP-dependent manner. PurS interacts with PurQ and PurL and is thought to assist in the transfer of the ammonia molecule from PurQ to PurL. This chain is Phosphoribosylformylglycinamidine synthase subunit PurQ, found in Frankia casuarinae (strain DSM 45818 / CECT 9043 / HFP020203 / CcI3).